The chain runs to 277 residues: Sulfur carrier protein FdhD (277 aa).

Cysteine 121 (cysteine persulfide intermediate) is an active-site residue. 260–265 (FCKPGR) contacts Mo-bis(molybdopterin guanine dinucleotide).

This sequence belongs to the FdhD family.

It localises to the cytoplasm. Required for formate dehydrogenase (FDH) activity. Acts as a sulfur carrier protein that transfers sulfur from IscS to the molybdenum cofactor prior to its insertion into FDH. The protein is Sulfur carrier protein FdhD of Escherichia coli O6:H1 (strain CFT073 / ATCC 700928 / UPEC).